A 667-amino-acid chain; its full sequence is Polypeptide N-acetylgalactosaminyltransferase 3 (667 aa).

Over 1-12 (MGLRFQQLKKLW) the chain is Cytoplasmic. Residues 13–35 (LLYLFLLFFAFFMFAISINLYVA) traverse the membrane as a helical; Signal-anchor for type II membrane protein segment. Over 36–667 (SIQGGDAEMR…WGFIPLPWRM (632 aa)) the chain is Lumenal. Residues asparagine 75 and asparagine 129 are each glycosylated (N-linked (GlcNAc...) asparagine). 5 cysteine pairs are disulfide-bonded: cysteine 140–cysteine 375, cysteine 366–cysteine 446, cysteine 526–cysteine 547, cysteine 572–cysteine 601, and cysteine 626–cysteine 649. The tract at residues 149 to 259 (LPSTSVIIVF…RGWLEPLLSR (111 aa)) is catalytic subdomain A. Residues aspartate 190 and arginine 220 each contribute to the substrate site. Residues aspartate 243 and histidine 245 each contribute to the Mn(2+) site. Asparagine 279 and asparagine 313 each carry an N-linked (GlcNAc...) asparagine glycan. The tract at residues 321 to 383 (PIATPGMAGG…PCSHVGHVFR (63 aa)) is catalytic subdomain B. Tryptophan 352 is a binding site for substrate. Mn(2+) is bound at residue histidine 380. Arginine 383 and tyrosine 388 together coordinate substrate. An N-linked (GlcNAc...) asparagine glycan is attached at asparagine 433. The Ricin B-type lectin domain maps to 513-661 (EELMALIDLE…KDITQKWGFI (149 aa)). A glycan (N-linked (GlcNAc...) asparagine) is linked at asparagine 590.

The protein belongs to the glycosyltransferase 2 family. GalNAc-T subfamily. Mn(2+) serves as cofactor. In terms of tissue distribution, expressed in developing oocytes and egg chambers. During embryonic stages 9-11, expressed in the primordiums of the foregut, midgut and hindgut. During embryonic stages 12-13, expression is found uniquely in the posterior spiracle. During embryonic stages 14-17, expressed in the pharynx, esophagus and posterior spiracles. Expression observed in the epidermis during embryonic stages 16-17. In third instar larvae, expressed ubiquitously in wing, with increased expression in pleura and notum, eye-antennal, leg and haltere imaginal disks.

The protein resides in the golgi apparatus membrane. It carries out the reaction L-seryl-[protein] + UDP-N-acetyl-alpha-D-galactosamine = a 3-O-[N-acetyl-alpha-D-galactosaminyl]-L-seryl-[protein] + UDP + H(+). The catalysed reaction is L-threonyl-[protein] + UDP-N-acetyl-alpha-D-galactosamine = a 3-O-[N-acetyl-alpha-D-galactosaminyl]-L-threonyl-[protein] + UDP + H(+). It participates in protein modification; protein glycosylation. Functionally, catalyzes the initial reaction in O-linked oligosaccharide biosynthesis, the transfer of an N-acetyl-D-galactosamine residue to a serine or threonine residue on the protein receptor. It can both act as a peptide transferase that transfers GalNAc onto unmodified peptide substrates, and as a glycopeptide transferase that requires the prior addition of a GalNAc on a peptide before adding additional GalNAc moieties. Prefers EA2 as substrate. Has weak activity toward Muc5AC-3, -13 and -3/13 substrates. Plays a critical role in the regulation of integrin-mediated cell adhesion during wing development by influencing, via glycosylation, the secretion and localization of the integrin ligand Tig to the basal cell layer interface. Might have a role in protein O-glycosylation in the Golgi and thereby in establishing and/or maintaining a proper secretory apparatus structure. Together with Pgant35A, regulates integrin levels and activity-dependent integrin signaling at the synapse in neurons and muscles. This chain is Polypeptide N-acetylgalactosaminyltransferase 3, found in Drosophila melanogaster (Fruit fly).